A 505-amino-acid polypeptide reads, in one-letter code: Maturase K (505 aa).

Belongs to the intron maturase 2 family. MatK subfamily.

It is found in the plastid. It localises to the chloroplast. Functionally, usually encoded in the trnK tRNA gene intron. Probably assists in splicing its own and other chloroplast group II introns. The polypeptide is Maturase K (Spinacia oleracea (Spinach)).